We begin with the raw amino-acid sequence, 151 residues long: Deoxyuridine 5'-triphosphate nucleotidohydrolase (151 aa).

Substrate contacts are provided by residues 70–72, Asn83, 87–89, and Met97; these read RSG and LID.

The protein belongs to the dUTPase family. Mg(2+) is required as a cofactor.

The enzyme catalyses dUTP + H2O = dUMP + diphosphate + H(+). Its pathway is pyrimidine metabolism; dUMP biosynthesis; dUMP from dCTP (dUTP route): step 2/2. This enzyme is involved in nucleotide metabolism: it produces dUMP, the immediate precursor of thymidine nucleotides and it decreases the intracellular concentration of dUTP so that uracil cannot be incorporated into DNA. The polypeptide is Deoxyuridine 5'-triphosphate nucleotidohydrolase (Pseudomonas syringae pv. tomato (strain ATCC BAA-871 / DC3000)).